A 164-amino-acid chain; its full sequence is SsrA-binding protein (164 aa).

The interval 141–164 is disordered; sequence KLHDKRQDEKQKSIKKEINSALKR. A compositionally biased stretch (basic and acidic residues) spans 145-158; it reads KRQDEKQKSIKKEI.

Belongs to the SmpB family.

Its subcellular location is the cytoplasm. Functionally, required for rescue of stalled ribosomes mediated by trans-translation. Binds to transfer-messenger RNA (tmRNA), required for stable association of tmRNA with ribosomes. tmRNA and SmpB together mimic tRNA shape, replacing the anticodon stem-loop with SmpB. tmRNA is encoded by the ssrA gene; the 2 termini fold to resemble tRNA(Ala) and it encodes a 'tag peptide', a short internal open reading frame. During trans-translation Ala-aminoacylated tmRNA acts like a tRNA, entering the A-site of stalled ribosomes, displacing the stalled mRNA. The ribosome then switches to translate the ORF on the tmRNA; the nascent peptide is terminated with the 'tag peptide' encoded by the tmRNA and targeted for degradation. The ribosome is freed to recommence translation, which seems to be the essential function of trans-translation. This Prochlorococcus marinus (strain AS9601) protein is SsrA-binding protein.